The chain runs to 412 residues: MSGKEKILLAYSGGLDTSCILKWLLEKGYEVICFMADVGQEEDFVAAREKALRVGAKDVIIKDMKRIFVEKFVWPAIQMGLVYEDRYLLGTSLARPCISIGLMESAAEHSCSIISHGATGKGNDQIRFELSCYALDPKIKVIAPWRLPEFCERFQGRKDLLDYAQKHGIPVSATPKAPWSMDANIMHISYESGILENPAKAAPEELYQMTQSVMKSSNTPIKVDITFKEGLPVTVLEHSGGKTLETPLEVLTFLNKIGGEQGVGRVDLVENRFLGLKSRGVYETPGATILHVAHKDMEVYCLDREIFRVKSFLALKMADYVYNGFWYSPEAEYVRTCLVGAQKNVSGKVTLEIFKGHVIAIARESTKTIYNQELASMDVHGTLSPYAATGFIEVNAMRLKEHYRVFGSANME.

ATP contacts are provided by residues 10–18 and A36; that span reads AYSGGLDTS. Positions 87 and 92 each coordinate L-citrulline. 115 to 123 contacts ATP; sequence SHGATGKGN. L-aspartate contacts are provided by T119, N123, and D124. L-citrulline is bound at residue N123. Residues R127, S180, S189, E270, and Y282 each coordinate L-citrulline.

The protein belongs to the argininosuccinate synthase family. In terms of assembly, homotetramer.

The enzyme catalyses L-citrulline + L-aspartate + ATP = 2-(N(omega)-L-arginino)succinate + AMP + diphosphate + H(+). It participates in amino-acid biosynthesis; L-arginine biosynthesis; L-arginine from L-ornithine and carbamoyl phosphate: step 2/3. Its pathway is nitrogen metabolism; urea cycle; (N(omega)-L-arginino)succinate from L-aspartate and L-citrulline: step 1/1. This Aedes aegypti (Yellowfever mosquito) protein is Argininosuccinate synthase.